Consider the following 85-residue polypeptide: ATP synthase subunit c (85 aa).

Helical transmembrane passes span 10–30 (IAVS…FGIL) and 53–73 (FIVA…ALLF).

It belongs to the ATPase C chain family. As to quaternary structure, F-type ATPases have 2 components, F(1) - the catalytic core - and F(0) - the membrane proton channel. F(1) has five subunits: alpha(3), beta(3), gamma(1), delta(1), epsilon(1). F(0) has three main subunits: a(1), b(2) and c(10-14). The alpha and beta chains form an alternating ring which encloses part of the gamma chain. F(1) is attached to F(0) by a central stalk formed by the gamma and epsilon chains, while a peripheral stalk is formed by the delta and b chains.

The protein localises to the cell inner membrane. In terms of biological role, f(1)F(0) ATP synthase produces ATP from ADP in the presence of a proton or sodium gradient. F-type ATPases consist of two structural domains, F(1) containing the extramembraneous catalytic core and F(0) containing the membrane proton channel, linked together by a central stalk and a peripheral stalk. During catalysis, ATP synthesis in the catalytic domain of F(1) is coupled via a rotary mechanism of the central stalk subunits to proton translocation. Functionally, key component of the F(0) channel; it plays a direct role in translocation across the membrane. A homomeric c-ring of between 10-14 subunits forms the central stalk rotor element with the F(1) delta and epsilon subunits. This chain is ATP synthase subunit c, found in Idiomarina loihiensis (strain ATCC BAA-735 / DSM 15497 / L2-TR).